The sequence spans 1960 residues: Zinc finger protein 638 (1960 aa).

The interval 1-137 is disordered; sequence MSRPRFNPRG…SPKVQSRYTK (137 aa). The segment covering 19-31 has biased composition (pro residues); sequence APNPPGMRPPGPF. Residues Arg47, Arg49, and Arg54 each carry the asymmetric dimethylarginine modification. Over residues 60-75 the composition is skewed to polar residues; the sequence is SYQNMGPQRMNVQVTQ. The span at 76–89 shows a compositional bias: basic and acidic residues; that stretch reads HRTDPRLTKEKLDF. Residues 117 to 137 show a composition bias toward polar residues; that stretch reads KQSSVTQVTEQSPKVQSRYTK. Phosphoserine occurs at positions 128 and 288. Lys291 participates in a covalent cross-link: Glycyl lysine isopeptide (Lys-Gly) (interchain with G-Cter in SUMO2). Residues Ser298, Ser367, Ser381, and Ser418 each carry the phosphoserine modification. Residues 352-373 form a disordered region; it reads KSVISSADAHGGPTESKKDYQS. 3 disordered regions span residues 463-673, 749-804, and 827-899; these read NPEI…QSLS, PGKK…STVK, and KASI…KESE. The segment covering 468–483 has biased composition (basic and acidic residues); that stretch reads PSRRNESNRKENETPR. The interval 470-573 is involved in localization to nuclear speckles; that stretch reads RRNESNRKEN…ERTSRKSVRS (104 aa). Residues 484 to 556 show a composition bias toward basic residues; the sequence is RRSHSPSPRH…SRNLLRRSPK (73 aa). The residue at position 554 (Ser554) is a Phosphoserine. Basic and acidic residues-rich tracts occupy residues 565-583 and 591-602; these read RTSR…EDGG and EVTKQKHTETVD. 2 positions are modified to phosphoserine: Ser606 and Ser615. Low complexity predominate over residues 618 to 628; the sequence is KPSAKSLSSVK. Position 637 is a phosphoserine (Ser637). Residues 676–751 enclose the RRM 1 domain; sequence SILLVSELPE…KSVKVCVPGK (76 aa). The segment covering 755-782 has biased composition (basic and acidic residues); sequence QNKEMKKKPSDIKKSSASALKKETDASK. Lys775 participates in a covalent cross-link: Glycyl lysine isopeptide (Lys-Gly) (interchain with G-Cter in SUMO2). The span at 783–802 shows a compositional bias: low complexity; that stretch reads TMETVSSSSSAKSGQIKSST. 3 stretches are compositionally biased toward basic and acidic residues: residues 838 to 854, 867 to 879, and 888 to 899; these read KSLE…KDSN, ASSE…KSAE, and ATEKEPVNKESE. The RRM 2 domain maps to 902–976; the sequence is SVVFISNLPN…NQLSISMAPE (75 aa). Over residues 1082–1092 the composition is skewed to basic and acidic residues; it reads SEVQRKNDLEL. Disordered stretches follow at residues 1082–1151, 1396–1420, 1442–1462, 1484–1527, and 1550–1583; these read SEVQ…EEPK, TVVS…PKPV, TRSG…GVNR, TKQS…KSKE, and PSQA…KGKT. Phosphoserine is present on Ser1099. Residues 1140 to 1151 show a composition bias toward basic and acidic residues; the sequence is VHQEELGKEEPK. The span at 1399–1409 shows a compositional bias: low complexity; sequence SSPKAKSTPSK. Ser1400 bears the Phosphoserine mark. The span at 1442–1459 shows a compositional bias: polar residues; the sequence is TRSGLAESNSKSKPTQIG. Basic and acidic residues-rich tracts occupy residues 1484 to 1503 and 1518 to 1527; these read TKQS…DDSN and TTDRSSKSKE. A phosphoserine mark is found at Ser1635 and Ser1661. Disordered stretches follow at residues 1763–1898 and 1930–1960; these read EVGD…SDVP and KSTR…RSSR. Residues 1772–1790 show a composition bias toward basic and acidic residues; sequence NDSKVELARGKIEHHTDKK. A Glycyl lysine isopeptide (Lys-Gly) (interchain with G-Cter in SUMO2) cross-link involves residue Lys1804. Polar residues predominate over residues 1806–1818; sequence DSFSQVGPGSETV. Over residues 1819–1831 the composition is skewed to basic and acidic residues; that stretch reads TQKDLKTMPERHL. At Ser1864 the chain carries Phosphoserine. The span at 1870–1885 shows a compositional bias: basic and acidic residues; it reads AELKDSEPDEKRRKTQ. The Matrin-type zinc-finger motif lies at 1876-1906; it reads EPDEKRRKTQDSSVGKSMTSDVPGDLDFLVP. A compositionally biased stretch (polar residues) spans 1886-1895; sequence DSSVGKSMTS. Residues 1936 to 1960 are compositionally biased toward basic and acidic residues; it reads QNTEKFMAKQRKEKEQNETEERSSR.

Interacts with FHL2. Interacts with CEBPA, CEBPD and CEBPG. Interacts with MPHOSPH8 and TASOR components of the HUSH complex; leading to recruitment of the HUSH complex. Interacts with SETDB1. Interacts with HDAC1. Interacts with HDAC4.

Its subcellular location is the nucleus speckle. Functionally, transcription factor that binds to cytidine clusters in double-stranded DNA. Plays a key role in the silencing of unintegrated retroviral DNA: some part of the retroviral DNA formed immediately after infection remains unintegrated in the host genome and is transcriptionally repressed. Mediates transcriptional repression of unintegrated viral DNA by specifically binding to the cytidine clusters of retroviral DNA and mediating the recruitment of chromatin silencers, such as the HUSH complex, SETDB1 and the histone deacetylases HDAC1 and HDAC4. Acts as an early regulator of adipogenesis by acting as a transcription cofactor of CEBPs (CEBPA, CEBPD and/or CEBPG), controlling the expression of PPARG and probably of other proadipogenic genes, such as SREBF1. May also regulate alternative splicing of target genes during adipogenesis. The polypeptide is Zinc finger protein 638 (Mus musculus (Mouse)).